The following is a 495-amino-acid chain: Trimethylamine methyltransferase MttB1 (495 aa).

O334 is a non-standard amino acid (pyrrolysine).

This sequence belongs to the trimethylamine methyltransferase family. In terms of assembly, can form a complex with MttC.

It carries out the reaction Co(I)-[trimethylamine-specific corrinoid protein] + trimethylamine + H(+) = methyl-Co(III)-[trimethylamine-specific corrinoid protein] + dimethylamine. The protein operates within one-carbon metabolism; methanogenesis from trimethylamine. In terms of biological role, catalyzes the transfer of a methyl group from trimethylamine to the corrinoid cofactor of MttC. In Methanosarcina mazei (strain ATCC BAA-159 / DSM 3647 / Goe1 / Go1 / JCM 11833 / OCM 88) (Methanosarcina frisia), this protein is Trimethylamine methyltransferase MttB1 (mttB1).